We begin with the raw amino-acid sequence, 113 residues long: Histidine triad nucleotide-binding protein (113 aa).

Zn(2+) is bound by residues cysteine 5 and cysteine 8. Residues 6–113 form the HIT domain; sequence IFCKIAQKQI…GGKKLAWDKL (108 aa). Aspartate 31 contributes to the AMP binding site. Histidine 47 contacts Zn(2+). AMP is bound by residues asparagine 86, glycine 92, and threonine 94. Histidine 97 contributes to the Zn(2+) binding site. The Histidine triad motif signature appears at 97–101; it reads HIHFH. AMP-binding residues include histidine 99 and histidine 101. Catalysis depends on histidine 99, which acts as the Tele-AMP-histidine intermediate.

Belongs to the HINT family.

It is found in the nucleus. The protein resides in the cytoplasm. It carries out the reaction adenosine 5'-phosphoramidate + H2O = AMP + NH4(+). Hydrolyzes purine nucleotide phosphoramidates with a single phosphate group, including adenosine 5'monophosphoramidate (AMP-NH2), adenosine 5'monophosphomorpholidate (AMP-morpholidate) and guanosine 5'monophosphomorpholidate (GMP-morpholidate). Hydrolyzes lysyl-AMP (AMP-N-epsilon-(N-alpha-acetyl lysine methyl ester)) generated by lysine tRNA ligase, as well as Met-AMP, His-AMP and Asp-AMP, lysyl-GMP (GMP-N-epsilon-(N-alpha-acetyl lysine methyl ester)) and AMP-N-alanine methyl ester. May also function as scaffolding protein that mediates protein-protein interactions. In Entamoeba histolytica (strain ATCC 30459 / HM-1:IMSS / ABRM), this protein is Histidine triad nucleotide-binding protein.